Consider the following 313-residue polypeptide: LOB domain-containing protein 36 (313 aa).

An LOB domain is found at 6–107 (SPCAACKFLR…HDLENAKKEL (102 aa)). The disordered stretch occupies residues 245–313 (GNFVDSPSTN…SEEGRRNVIG (69 aa)). Residues 249-260 (DSPSTNNNYHTD) are compositionally biased toward polar residues. Low complexity predominate over residues 280–302 (PSQSSQPLPLQTQETQTQTQPNS).

The protein belongs to the LOB domain-containing protein family. Expressed in trichomes, at the base of many lateral organs, including branching points of the inflorescence and floral organs and in the distal part of the pistil at stages when style and stigma start to develop. Also detected in pedicels and at the base of petals and sepals.

In terms of biological role, controls the proximal-distal patterning in petals and the adaxial-abaxial determination of leaves. Involved in the repression of the homeobox gene BP. The sequence is that of LOB domain-containing protein 36 (LBD36) from Arabidopsis thaliana (Mouse-ear cress).